We begin with the raw amino-acid sequence, 196 residues long: MKWCGVLMVALLQSLCCSGLPLYQSELASTADKALVVTMTQVNNLYAGLRLYRVSRGSIKRVVPLGLNTYDLIMNFGIKETDCLKSSGEDPQRCAFRVGFFVPAASCTARVRVTAEFTQVVSLNCGQDSSSSESSSEENFTRKRQQLNVQPFGNRGPVLPVPGFSEATRFPSHSFSRQEVEPQPIPRGDSFGNHLE.

A signal peptide spans 1 to 19 (MKWCGVLMVALLQSLCCSG). 2 disulfide bridges follow: Cys83–Cys94 and Cys107–Cys125. The segment at 125–196 (CGQDSSSSES…RGDSFGNHLE (72 aa)) is disordered. The segment covering 129 to 138 (SSSSESSSEE) has biased composition (low complexity).

The protein belongs to the SPP2 family. Post-translationally, multiply phosphorylated at serine residues.

Its subcellular location is the secreted. Could coordinate an aspect of bone turnover. The chain is Secreted phosphoprotein 24 (spp2) from Salmo salar (Atlantic salmon).